A 245-amino-acid polypeptide reads, in one-letter code: Probable transcriptional regulatory protein Aflv_0709 (245 aa).

The segment covering 1-14 (MAGHSKWKNIQRRK) has biased composition (basic residues). Residues 1–21 (MAGHSKWKNIQRRKNAQDAKR) form a disordered region.

The protein belongs to the TACO1 family.

It localises to the cytoplasm. The polypeptide is Probable transcriptional regulatory protein Aflv_0709 (Anoxybacillus flavithermus (strain DSM 21510 / WK1)).